The chain runs to 330 residues: MNVYYEQDADLGRLQGKNIAVLGYGSQGHAHALNLKDSGMNVCVGLRPDSSSCAKAREAGLRVEPVADAVKWADIVMVLLPDQTQKAVYEAEIAPNMVAGNTLAFGHGFNIHYNQIVPPADVDVIMIAPKSPGHLVRRTYTEGNGVPCLIAVHQDATGEAKKTALAWAKGIGGTKAGVIETNFKDETETDLFGEQAVLCGGSAELIKAGFETLVEAGYPEELAYFECMHELKLIVDLYYEGGLSRMNYSVSDTAEYGGMTRGPRLITSAVKAEMKKVLEEVQDGRFAREFIDECNGGYKNLNRLREENSGHAIEKVGAKLRNMMSWLVRK.

The region spanning 1 to 181 is the KARI N-terminal Rossmann domain; it reads MNVYYEQDAD…GGTKAGVIET (181 aa). Residues 24-27, R47, S50, S52, and 82-85 each bind NADP(+); these read YGSQ and DQTQ. Residue H107 is part of the active site. Residue G133 coordinates NADP(+). The region spanning 182–327 is the KARI C-terminal knotted domain; sequence NFKDETETDL…AKLRNMMSWL (146 aa). Positions 190, 194, 226, and 230 each coordinate Mg(2+). S251 contributes to the substrate binding site.

This sequence belongs to the ketol-acid reductoisomerase family. Mg(2+) serves as cofactor.

It catalyses the reaction (2R)-2,3-dihydroxy-3-methylbutanoate + NADP(+) = (2S)-2-acetolactate + NADPH + H(+). The enzyme catalyses (2R,3R)-2,3-dihydroxy-3-methylpentanoate + NADP(+) = (S)-2-ethyl-2-hydroxy-3-oxobutanoate + NADPH + H(+). The protein operates within amino-acid biosynthesis; L-isoleucine biosynthesis; L-isoleucine from 2-oxobutanoate: step 2/4. It participates in amino-acid biosynthesis; L-valine biosynthesis; L-valine from pyruvate: step 2/4. Involved in the biosynthesis of branched-chain amino acids (BCAA). Catalyzes an alkyl-migration followed by a ketol-acid reduction of (S)-2-acetolactate (S2AL) to yield (R)-2,3-dihydroxy-isovalerate. In the isomerase reaction, S2AL is rearranged via a Mg-dependent methyl migration to produce 3-hydroxy-3-methyl-2-ketobutyrate (HMKB). In the reductase reaction, this 2-ketoacid undergoes a metal-dependent reduction by NADPH to yield (R)-2,3-dihydroxy-isovalerate. This is Ketol-acid reductoisomerase (NADP(+)) from Chlorobium luteolum (strain DSM 273 / BCRC 81028 / 2530) (Pelodictyon luteolum).